Consider the following 101-residue polypeptide: Small ribosomal subunit protein uS10 (101 aa).

Belongs to the universal ribosomal protein uS10 family. As to quaternary structure, part of the 30S ribosomal subunit.

Involved in the binding of tRNA to the ribosomes. This chain is Small ribosomal subunit protein uS10, found in Brachyspira hyodysenteriae (Treponema hyodysenteriae).